The primary structure comprises 321 residues: L-carnitine dehydrogenase (321 aa).

14 to 19 (GSGVIG) contributes to the NAD(+) binding site. The segment at 317–321 (MTFSE) is important for catalytic activity.

The protein belongs to the 3-hydroxyacyl-CoA dehydrogenase family. L-carnitine dehydrogenase subfamily. As to quaternary structure, homodimer.

The protein localises to the cytoplasm. It carries out the reaction carnitine + NAD(+) = 3-dehydrocarnitine + NADH + H(+). Its pathway is amine and polyamine metabolism; carnitine metabolism. With respect to regulation, the enzyme activity is strongly inhibited by Ag(+), Ni(+), Hg(+), and p-chloromercuribenzoate, and partially inhibited by Li(+), Ca(2+), Mn(2+), Co(2+), Cu(2+), and Zn(2+). Functionally, catalyzes the NAD(+)-dependent oxidation of L-carnitine to 3-dehydrocarnitine. Is specific for L-carnitine and NAD(+) as substrates since D-carnitine, other carnitine analogs such as choline and betaine, and NADP(+) are not substrates. Despite a high similarity to 3-hydroxyacyl-CoA dehydrogenases, cannot dehydrogenate 3-hydroxybutylate and 3-hydroxybutyl-CoA. Is probably involved in a L-carnitine degradation pathway that allows Pseudomonas sp. strain NBRC 13558 to grow on L-carnitine as the sole source of carbon and nitrogen. The chain is L-carnitine dehydrogenase from Pseudomonas sp.